Consider the following 129-residue polypeptide: MRALALDIGLKRIGVALCVDKKIALPLDAVLRKNRNQAANEIKNLLKIHEISLLIVGIPKGGSSEEEMTRRIKHFVSLLEFDKEICFVDESGTSKKALEYGIANTRKKDGKLDSLAAFIMIKDYFCSLE.

Belongs to the YqgF nuclease family.

Its subcellular location is the cytoplasm. Functionally, could be a nuclease involved in processing of the 5'-end of pre-16S rRNA. This Campylobacter jejuni subsp. doylei (strain ATCC BAA-1458 / RM4099 / 269.97) protein is Putative pre-16S rRNA nuclease.